Reading from the N-terminus, the 406-residue chain is Serine/threonine transporter SstT (406 aa).

Transmembrane regions (helical) follow at residues 21–41 (LIIGIMLALWIPDIAAPVAIL), 45–65 (FVGALKAVAPVLVLILVMGAI), 79–99 (ILILYLLGTFLAGVTAVIASF), 138–158 (ALMNANYIGILSWAILLGLAL), 179–199 (VVKWVINLAPLGILGLVFDSI), 213–233 (LLLLLVGCMVFVALIINPLIV), 285–305 (ISIPLGATINMAGAAVTIAVL), 313–333 (LGITVDIPTAIILSVLSAIAA), and 360–380 (IAMQVVGVGFIIGVVQDSCET).

This sequence belongs to the dicarboxylate/amino acid:cation symporter (DAACS) (TC 2.A.23) family.

It localises to the cell membrane. It catalyses the reaction L-serine(in) + Na(+)(in) = L-serine(out) + Na(+)(out). The catalysed reaction is L-threonine(in) + Na(+)(in) = L-threonine(out) + Na(+)(out). Its function is as follows. Involved in the import of serine and threonine into the cell, with the concomitant import of sodium (symport system). This chain is Serine/threonine transporter SstT, found in Desulfitobacterium hafniense (strain Y51).